Consider the following 274-residue polypeptide: Putative outer membrane protein CPn_1073/CP_0776/CPj1073/CpB1118 (274 aa).

The signal sequence occupies residues 1 to 21 (MRRYLFMVLALCLYRAAPLEA).

The protein localises to the cell outer membrane. This chain is Putative outer membrane protein CPn_1073/CP_0776/CPj1073/CpB1118, found in Chlamydia pneumoniae (Chlamydophila pneumoniae).